Here is a 74-residue protein sequence, read N- to C-terminus: MAPNIRKSHPLLKMINNSLIDLPAPSNISAWWNFGSLLAICLVTQILTGLLLAMHYTADTSLAFSSVAHTCRDV.

Residues 34–54 (FGSLLAICLVTQILTGLLLAM) form a helical membrane-spanning segment.

Belongs to the cytochrome b family. In terms of assembly, the cytochrome bc1 complex contains 11 subunits: 3 respiratory subunits (MT-CYB, CYC1 and UQCRFS1), 2 core proteins (UQCRC1 and UQCRC2) and 6 low-molecular weight proteins (UQCRH/QCR6, UQCRB/QCR7, UQCRQ/QCR8, UQCR10/QCR9, UQCR11/QCR10 and a cleavage product of UQCRFS1). This cytochrome bc1 complex then forms a dimer. The cofactor is heme.

The protein localises to the mitochondrion inner membrane. Functionally, component of the ubiquinol-cytochrome c reductase complex (complex III or cytochrome b-c1 complex) that is part of the mitochondrial respiratory chain. The b-c1 complex mediates electron transfer from ubiquinol to cytochrome c. Contributes to the generation of a proton gradient across the mitochondrial membrane that is then used for ATP synthesis. The polypeptide is Cytochrome b (MT-CYB) (Anser caerulescens (Snow goose)).